Reading from the N-terminus, the 88-residue chain is Small ribosomal subunit protein bS16c (88 aa).

This sequence belongs to the bacterial ribosomal protein bS16 family.

The protein resides in the plastid. The protein localises to the chloroplast. In Lactuca sativa (Garden lettuce), this protein is Small ribosomal subunit protein bS16c.